Here is a 337-residue protein sequence, read N- to C-terminus: Inositol 2-dehydrogenase (337 aa).

It belongs to the Gfo/Idh/MocA family. In terms of assembly, homotetramer.

It catalyses the reaction myo-inositol + NAD(+) = scyllo-inosose + NADH + H(+). Its function is as follows. Involved in the oxidation of myo-inositol (MI) to 2-keto-myo-inositol (2KMI or 2-inosose). This is Inositol 2-dehydrogenase from Gluconacetobacter diazotrophicus (strain ATCC 49037 / DSM 5601 / CCUG 37298 / CIP 103539 / LMG 7603 / PAl5).